The sequence spans 190 residues: Elongation factor P (190 aa).

The protein belongs to the elongation factor P family.

The protein localises to the cytoplasm. Its pathway is protein biosynthesis; polypeptide chain elongation. Functionally, involved in peptide bond synthesis. Stimulates efficient translation and peptide-bond synthesis on native or reconstituted 70S ribosomes in vitro. Probably functions indirectly by altering the affinity of the ribosome for aminoacyl-tRNA, thus increasing their reactivity as acceptors for peptidyl transferase. The protein is Elongation factor P (efp) of Mycoplasma pneumoniae (strain ATCC 29342 / M129 / Subtype 1) (Mycoplasmoides pneumoniae).